The primary structure comprises 394 residues: Venom metalloproteinase antarease TserMP_A (394 aa).

Residues 1–16 (MISYLASIFLLATVSA) form the signal peptide. A propeptide spanning residues 17–157 (VPSGRVEVVF…NAENVSRMAR (141 aa)) is cleaved from the precursor. The region spanning 162–391 (IVVEYYIVTD…PTASCIFQQC (230 aa)) is the Peptidase M12B domain. C295 and C386 form a disulfide bridge. H319 lines the Zn(2+) pocket. E320 is a catalytic residue. Zn(2+)-binding residues include H323 and H329.

Zn(2+) serves as cofactor. In terms of processing, contains 4 disulfide bonds. As to expression, expressed by the venom gland.

Its subcellular location is the secreted. With respect to regulation, inhibited by EDTA. In terms of biological role, acts as a metalloprotease. Penetrates intact tissue and specifically cleaves the vesicle-associated membrane protein 2 (VAMP2) (part of the SNARE complex) involved in pancreatic secretion, thus disrupting the normal vesicular traffic. The protein is Venom metalloproteinase antarease TserMP_A of Tityus serrulatus (Brazilian scorpion).